Here is a 458-residue protein sequence, read N- to C-terminus: tRNA modification GTPase MnmE (458 aa).

(6S)-5-formyl-5,6,7,8-tetrahydrofolate-binding residues include R26, E88, and R127. The TrmE-type G domain occupies 224–378 (GLSTAIIGRP…IEDRINQLFF (155 aa)). Position 234 (N234) interacts with K(+). GTP is bound by residues 234–239 (NVGKSS), 253–259 (TDIAGTT), and 278–281 (DTAG). Residue S238 participates in Mg(2+) binding. Residues T253, I255, and T258 each coordinate K(+). Residue T259 participates in Mg(2+) binding. K458 contacts (6S)-5-formyl-5,6,7,8-tetrahydrofolate.

The protein belongs to the TRAFAC class TrmE-Era-EngA-EngB-Septin-like GTPase superfamily. TrmE GTPase family. As to quaternary structure, homodimer. Heterotetramer of two MnmE and two MnmG subunits. The cofactor is K(+).

Its subcellular location is the cytoplasm. Its function is as follows. Exhibits a very high intrinsic GTPase hydrolysis rate. Involved in the addition of a carboxymethylaminomethyl (cmnm) group at the wobble position (U34) of certain tRNAs, forming tRNA-cmnm(5)s(2)U34. The sequence is that of tRNA modification GTPase MnmE from Streptococcus pyogenes serotype M5 (strain Manfredo).